The sequence spans 309 residues: Homoserine O-succinyltransferase (309 aa).

The active-site Acyl-thioester intermediate is Cys142. Substrate is bound by residues Lys163 and Ser192. The active-site Proton acceptor is His235. Residue Glu237 is part of the active site. Arg249 serves as a coordination point for substrate.

It belongs to the MetA family.

The protein resides in the cytoplasm. The catalysed reaction is L-homoserine + succinyl-CoA = O-succinyl-L-homoserine + CoA. It functions in the pathway amino-acid biosynthesis; L-methionine biosynthesis via de novo pathway; O-succinyl-L-homoserine from L-homoserine: step 1/1. Transfers a succinyl group from succinyl-CoA to L-homoserine, forming succinyl-L-homoserine. This chain is Homoserine O-succinyltransferase, found in Klebsiella pneumoniae subsp. pneumoniae (strain ATCC 700721 / MGH 78578).